The chain runs to 994 residues: Regulator of telomere elongation helicase 1 homolog (994 aa).

The region spanning 15–324 (SKTSIKFPFE…KLIENLRTED (310 aa)) is the Helicase ATP-binding domain. 50–57 (SPTGTGKT) is a binding site for ATP. [4Fe-4S] cluster-binding residues include C142, C160, C169, and C208. The DEAH box motif lies at 251–254 (DEAH). Positions 818-831 (KIEKKEKIEPRPIK) are enriched in basic and acidic residues. The disordered stretch occupies residues 818-896 (KIEKKEKIEP…HVVSGSEPPK (79 aa)). Residues 833-844 (DSSSSSVFSLPT) are compositionally biased toward polar residues. Positions 847–856 (DELKVKKWEQ) are enriched in basic and acidic residues. Composition is skewed to polar residues over residues 859–869 (DSQTNVSSSSD) and 880–889 (PGNSSGQHVV).

Belongs to the helicase family. RAD3/XPD subfamily.

The protein localises to the nucleus. It carries out the reaction ATP + H2O = ADP + phosphate + H(+). Its function is as follows. A probable ATP-dependent DNA helicase implicated in DNA repair and the maintenance of genomic stability. Acts as an anti-recombinase to counteract toxic recombination and limit crossover during meiosis. Regulates meiotic recombination and crossover homeostasis by physically dissociating strand invasion events and thereby promotes noncrossover repair by meiotic synthesis dependent strand annealing (SDSA) as well as disassembly of D loop recombination intermediates. The protein is Regulator of telomere elongation helicase 1 homolog of Caenorhabditis briggsae.